Consider the following 559-residue polypeptide: Apolipoprotein N-acyltransferase 2 (559 aa).

Transmembrane regions (helical) follow at residues 27–47, 53–73, 86–106, 114–134, 153–173, and 187–207; these read LAGS…GFLL, HVAC…SFWL, ASTV…ACIL, ACAF…GILA, IADI…NACV, and VPVF…SLYG. The CN hydrolase domain occupies 221–507; it reads LALAIVQQNA…SAVLHVPVYP (287 aa). Glutamate 288 functions as the Proton acceptor in the catalytic mechanism. Lysine 358 is an active-site residue. The active-site Nucleophile is cysteine 416. The chain crosses the membrane as a helical span at residues 519–539; it reads WVIVLCALIFFAEGVRMAVHT.

This sequence belongs to the CN hydrolase family. Apolipoprotein N-acyltransferase subfamily.

The protein localises to the cell inner membrane. The catalysed reaction is N-terminal S-1,2-diacyl-sn-glyceryl-L-cysteinyl-[lipoprotein] + a glycerophospholipid = N-acyl-S-1,2-diacyl-sn-glyceryl-L-cysteinyl-[lipoprotein] + a 2-acyl-sn-glycero-3-phospholipid + H(+). It participates in protein modification; lipoprotein biosynthesis (N-acyl transfer). Functionally, catalyzes the phospholipid dependent N-acylation of the N-terminal cysteine of apolipoprotein, the last step in lipoprotein maturation. This Treponema pallidum (strain Nichols) protein is Apolipoprotein N-acyltransferase 2.